Reading from the N-terminus, the 471-residue chain is Heat shock 70 kDa protein 13 (471 aa).

Residues 1 to 22 (MAREMTILGSAVLTLLLAGYLA) form the signal peptide. Positions 314–352 (EEQDRKEPHSSDTELPKDKLSSADDHRVNSGFGRGLSDK) are disordered. Basic and acidic residues predominate over residues 315–341 (EQDRKEPHSSDTELPKDKLSSADDHRV).

The protein belongs to the heat shock protein 70 family. In terms of assembly, binds UBQLN2.

It localises to the microsome. The protein localises to the endoplasmic reticulum. Has peptide-independent ATPase activity. The polypeptide is Heat shock 70 kDa protein 13 (HSPA13) (Pongo abelii (Sumatran orangutan)).